Consider the following 156-residue polypeptide: Ribosome maturation factor RimP (156 aa).

Belongs to the RimP family.

The protein localises to the cytoplasm. Required for maturation of 30S ribosomal subunits. This is Ribosome maturation factor RimP from Oceanobacillus iheyensis (strain DSM 14371 / CIP 107618 / JCM 11309 / KCTC 3954 / HTE831).